We begin with the raw amino-acid sequence, 172 residues long: Translationally-controlled tumor protein homolog (172 aa).

In terms of domain architecture, TCTP spans 1–172; sequence MIIYRDCISQ…FKDGLEIEKC (172 aa). S46 is subject to Phosphoserine; by PLK1.

It belongs to the TCTP family.

The protein localises to the cytoplasm. Functionally, involved in calcium binding and microtubule stabilization. The chain is Translationally-controlled tumor protein homolog (TPT1) from Gallus gallus (Chicken).